Here is a 58-residue protein sequence, read N- to C-terminus: uncharacterized protein (58 aa).

The protein localises to the mitochondrion. This is an uncharacterized protein from Saccharomyces cerevisiae (strain ATCC 204508 / S288c) (Baker's yeast).